The primary structure comprises 795 residues: MKFSELWLREWVNPAIDSDALANQITMAGLEVDGVEPVAGSFHGVVVGEVVECAQHPNADKLRVTKVNVGGDRLLDIVCGAPNCRQGLRVAVATIGAVLPGDFKIKAAKLRGEPSEGMLCSFSELGISDDHSGIIELPADAPIGTDIREYLKLDDNTIEISVTPNRADCLGIIGVARDVAVLNQLPLVQPEIVPVGATIDDTLPITVEAPEACPRYLGRVVKGINVKAPTPLWMKEKLRRCGIRSIDAVVDVTNYVLLELGQPMHAFDKDRIEGGIVVRMAKEGETLVLLDGTEAKLNADTLVIADHNKALAMGGIFGGEHSGVNDETQNVLLECAFFSPLSITGRARRHGLHTDASHRYERGVDPALQHKAMERATRLLIDICGGEAGPVIDITNEATLPKRATITLRRSKLDRLIGHHIADEQVTDILRRLGCEVTEGKDEWQAVAPSWRFDMEIEEDLVEEVARVYGYNNIPDEPVQASLIMGTHREADLSLKRVKTLLNDKGYQEVITYSFVDPKVQQMIHPGVEALLLPSPISVEMSAMRLSLWTGLLATVVYNQNRQQNRVRIFESGLRFVPDTQAPLGIRQDLMLAGVICGNRYEEHWNLAKETVDFYDLKGDLESVLDLTGKLNEVEFRAEANPALHPGQSAAIYLKGERIGFVGVVHPELERKLDLNGRTLVFELEWNKLADRVVPQAREISRFPANRRDIAVVVAENVPAADILSECKKVGVNQVVGVNLFDVYRGKGVAEGYKSLAISLILQDTSRTLEEEEIAATVAKCVEALKERFQASLRD.

The tRNA-binding domain occupies 39–148 (AGSFHGVVVG…ADAPIGTDIR (110 aa)). Positions 401–476 (PKRATITLRR…RVYGYNNIPD (76 aa)) constitute a B5 domain. Asp454, Asp460, Glu463, and Glu464 together coordinate Mg(2+). The 94-residue stretch at 701 to 794 (SRFPANRRDI…LKERFQASLR (94 aa)) folds into the FDX-ACB domain.

The protein belongs to the phenylalanyl-tRNA synthetase beta subunit family. Type 1 subfamily. As to quaternary structure, tetramer of two alpha and two beta subunits. It depends on Mg(2+) as a cofactor.

It localises to the cytoplasm. It catalyses the reaction tRNA(Phe) + L-phenylalanine + ATP = L-phenylalanyl-tRNA(Phe) + AMP + diphosphate + H(+). This chain is Phenylalanine--tRNA ligase beta subunit (pheT), found in Escherichia coli (strain K12).